A 130-amino-acid chain; its full sequence is MSMQDPISDMLTRIRNGQAASKVSVKMPSSKQKVAIAAVLKAEGYVTEFVVAGDTKPELEVTLKYFEGKKVIDTIKRVSRPGLRIYKGANDLPKVMAGLGIAIISTSHGVMTDRAARKASIGGEIICYVS.

The protein belongs to the universal ribosomal protein uS8 family. In terms of assembly, part of the 30S ribosomal subunit. Contacts proteins S5 and S12.

Functionally, one of the primary rRNA binding proteins, it binds directly to 16S rRNA central domain where it helps coordinate assembly of the platform of the 30S subunit. The chain is Small ribosomal subunit protein uS8 from Psychromonas ingrahamii (strain DSM 17664 / CCUG 51855 / 37).